Reading from the N-terminus, the 189-residue chain is UPF0301 protein RP032 (189 aa).

It belongs to the UPF0301 (AlgH) family.

This chain is UPF0301 protein RP032, found in Rickettsia prowazekii (strain Madrid E).